The primary structure comprises 416 residues: Putative gustatory receptor 57a (416 aa).

At 1 to 13 (MAVLYFFREPETV) the chain is on the cytoplasmic side. The chain crosses the membrane as a helical span at residues 14–34 (FDCAAFICILQFLMGCNGFGI). The Extracellular portion of the chain corresponds to 35-48 (RRSTFRISWASRIY). A helical transmembrane segment spans residues 49-69 (SMSVAIAAFCCLFGSLSVLLA). The Cytoplasmic portion of the chain corresponds to 70-83 (EEDIRERLAKADNL). Residues 84 to 104 (VLSISALELLMSTLVFGVTVI) form a helical membrane-spanning segment. Residues 105–143 (SLQVFARRHLGIYQRLAALDARLMSDFGANLNYRKMLRK) lie on the Extracellular side of the membrane. A helical membrane pass occupies residues 144 to 164 (NIAVLGIVTTIYLMAINSAAV). The Cytoplasmic portion of the chain corresponds to 165–171 (QVASGHR). A helical transmembrane segment spans residues 172–192 (ALFLLFALCYTIVTGGPHFTG). Residues 193–295 (YVHMTLAEML…NEEENGSCYR (103 aa)) are Extracellular-facing. A glycan (N-linked (GlcNAc...) asparagine) is linked at Asn-290. A helical membrane pass occupies residues 296–316 (MLGYLALVMIPPLYKLLIAPF). The Cytoplasmic portion of the chain corresponds to 317-374 (YCDRTIYEARRCLRLVEKLDDWFPQKSSLRPLVESLMSWRIQAKIQFTSGLDVVLSRK). The chain crosses the membrane as a helical span at residues 375 to 395 (VIGLFTSILVNYLLILIQFAM). The Extracellular segment spans residues 396 to 416 (TQKMGEQIEQQKIALQEWIGF).

It belongs to the insect chemoreceptor superfamily. Gustatory receptor (GR) family. Gr57a subfamily. In larvae, is expressed in neurons of the terminal external chemosensory organ as well as in the dorsal pharyngeal sense organ.

Its subcellular location is the cell membrane. Functionally, probable gustatory receptor which mediates acceptance or avoidance behavior, depending on its substrates. This Drosophila melanogaster (Fruit fly) protein is Putative gustatory receptor 57a (Gr57a).